A 297-amino-acid polypeptide reads, in one-letter code: HTH-type transcriptional regulator ArgP (297 aa).

The region spanning 4 to 60 (PDYRTLQALDAVIRERGFERAAQKLCITQSAVSQRIKQLENMFGQPLLVRTVPPRPT) is the HTH lysR-type domain. Positions 21–40 (FERAAQKLCITQSAVSQRIK) form a DNA-binding region, H-T-H motif.

This sequence belongs to the LysR transcriptional regulatory family. Homodimer.

Its function is as follows. Controls the transcription of genes involved in arginine and lysine metabolism. This Salmonella arizonae (strain ATCC BAA-731 / CDC346-86 / RSK2980) protein is HTH-type transcriptional regulator ArgP.